A 218-amino-acid polypeptide reads, in one-letter code: GTP cyclohydrolase 1 (218 aa).

Residues cysteine 111, histidine 114, and cysteine 182 each coordinate Zn(2+).

It belongs to the GTP cyclohydrolase I family. Toroid-shaped homodecamer, composed of two pentamers of five dimers.

The enzyme catalyses GTP + H2O = 7,8-dihydroneopterin 3'-triphosphate + formate + H(+). Its pathway is cofactor biosynthesis; 7,8-dihydroneopterin triphosphate biosynthesis; 7,8-dihydroneopterin triphosphate from GTP: step 1/1. This is GTP cyclohydrolase 1 from Buchnera aphidicola subsp. Schizaphis graminum (strain Sg).